We begin with the raw amino-acid sequence, 453 residues long: Putative receptor-like protein kinase At2g30940 (453 aa).

A helical transmembrane segment spans residues 60–80; that stretch reads ASASIAFLLVLIISVLLCFIF. Phosphothreonine is present on threonine 155. The Protein kinase domain occupies 166–428; it reads FADDNVITKG…IHMLQPHDLL (263 aa). ATP-binding positions include 172 to 180 and lysine 194; that span reads ITKGDSSTV. Phosphotyrosine is present on tyrosine 240. Residue aspartate 293 is the Proton acceptor of the active site. Residue serine 297 is modified to Phosphoserine. Threonine 322 is modified (phosphothreonine).

Belongs to the protein kinase superfamily.

Its subcellular location is the cell membrane. The enzyme catalyses L-seryl-[protein] + ATP = O-phospho-L-seryl-[protein] + ADP + H(+). It catalyses the reaction L-threonyl-[protein] + ATP = O-phospho-L-threonyl-[protein] + ADP + H(+). The chain is Putative receptor-like protein kinase At2g30940 from Arabidopsis thaliana (Mouse-ear cress).